We begin with the raw amino-acid sequence, 255 residues long: MILTIDIGNSNIDLAYFNGNKIVSHYEFETKKFSTSYEYALIIEWTLKREKLQEKDILGVALSSVVPSLTSAFIDAIKYLFGKPPFVVEPGIKTGISIETENPKEVGADLICNVVAITEEYGHCGIAVDFGTATTFSVVEKKKFLGAAIAPGVGTSAFALFEKTAKLPQVDIKAPESSLGKNTISAIQAGIVYGFAGLVDGILERQIKELKYKPVLVSTGGWAKRIVPYTKYLKEKDIDPYLTLKGLYYLYLKNL.

Residue 6-13 (DIGNSNID) participates in ATP binding. A substrate-binding site is contributed by 107–110 (GADL). Asp109 serves as the catalytic Proton acceptor. Residue Asp129 participates in K(+) binding. Thr132 contributes to the ATP binding site. Thr183 is a binding site for substrate.

Belongs to the type III pantothenate kinase family. Homodimer. Requires NH4(+) as cofactor. It depends on K(+) as a cofactor.

Its subcellular location is the cytoplasm. It catalyses the reaction (R)-pantothenate + ATP = (R)-4'-phosphopantothenate + ADP + H(+). The protein operates within cofactor biosynthesis; coenzyme A biosynthesis; CoA from (R)-pantothenate: step 1/5. Its function is as follows. Catalyzes the phosphorylation of pantothenate (Pan), the first step in CoA biosynthesis. The polypeptide is Type III pantothenate kinase (Dictyoglomus turgidum (strain DSM 6724 / Z-1310)).